A 377-amino-acid chain; its full sequence is Geranylgeranyl transferase type-1 subunit beta (377 aa).

4 PFTB repeats span residues 144–186, 193–234, 245–284, and 291–333; these read KEAC…YMLN, MKKA…CLMG, LNRI…KLLK, and FEKN…SLME. Residues 219–221 and 263–266 each bind geranylgeranyl diphosphate; these read HGG and RPNK. Zn(2+) contacts are provided by D269 and C271. 272 to 275 is a geranylgeranyl diphosphate binding site; it reads YSFW. A Zn(2+)-binding site is contributed by H321.

The protein belongs to the protein prenyltransferase subunit beta family. Heterodimer of FNTA and PGGT1B. PGGT1B mediates interaction with substrate peptides. It depends on Zn(2+) as a cofactor. Requires Mg(2+) as cofactor.

The catalysed reaction is geranylgeranyl diphosphate + L-cysteinyl-[protein] = S-geranylgeranyl-L-cysteinyl-[protein] + diphosphate. Functionally, catalyzes the transfer of a geranylgeranyl moiety from geranylgeranyl diphosphate to a cysteine at the fourth position from the C-terminus of proteins with the C-terminal sequence Cys-aliphatic-aliphatic-X. Known substrates include RAC1, RAC2, RAP1A and RAP1B. The protein is Geranylgeranyl transferase type-1 subunit beta (Pggt1b) of Rattus norvegicus (Rat).